The following is a 308-amino-acid chain: Putative T-box protein 30/42 (308 aa).

The segment at residues 11–192 (MSNEELWKER…KHSTFGNRSE (182 aa)) is a DNA-binding region (T-box). Positions 186–220 (TFGNRSEGGIKRKTSDAAGQLPSKRSSKKPVKKDV) are disordered.

It is found in the nucleus. Functionally, involved in the regulatory network to control embryonic patterning and morphogenesis. Implicated in negatively regulating vab-7 expression at the anterior of embryos. In Caenorhabditis elegans, this protein is Putative T-box protein 30/42 (tbx-30).